A 345-amino-acid polypeptide reads, in one-letter code: Protein GAMETE CELL DEFECTIVE 1, mitochondrial (345 aa).

A mitochondrion-targeting transit peptide spans 1–43 (MLALRKTLLHGRLPAAPPAAAAAAIASRIPALLRRLSSSPGDG). The tract at residues 36 to 81 (LSSSPGDGQGGDEWGSSWSTGITKEHFDGSDAAVGRPVTSPSKPVS) is disordered.

In terms of tissue distribution, expressed in roots, stems, leaves and florets.

Its subcellular location is the mitochondrion. Functionally, essential for fertility (male and female gametophyte functions and development). Required for the integrity of female gametic mitochondria. Involved in embryo apical-basal patterning, and particularly dorsal-ventral patterning, during early embryogenesis, and endosperm free nucleus positioning and development as well as early endosperm development, probably by modulating the expression pattern of related genes (e.g. AL1, MYB3/AL2, CYP78A13/GE, PNH1, HAZ1, MPK6 and OSH1). Has function in triggering of endosperm programmed cell death (PCD) leading to syncytial endosperm cellularization and starchy endosperm cell maturation. Implicated in central vacuole dynamics necessary for microspore development leading to pollen production, and for pollen development and germination. This chain is Protein GAMETE CELL DEFECTIVE 1, mitochondrial, found in Oryza sativa subsp. japonica (Rice).